We begin with the raw amino-acid sequence, 141 residues long: Large ribosomal subunit protein uL11 (141 aa).

This sequence belongs to the universal ribosomal protein uL11 family. In terms of assembly, part of the ribosomal stalk of the 50S ribosomal subunit. Interacts with L10 and the large rRNA to form the base of the stalk. L10 forms an elongated spine to which L12 dimers bind in a sequential fashion forming a multimeric L10(L12)X complex. Post-translationally, one or more lysine residues are methylated.

In terms of biological role, forms part of the ribosomal stalk which helps the ribosome interact with GTP-bound translation factors. This chain is Large ribosomal subunit protein uL11, found in Natranaerobius thermophilus (strain ATCC BAA-1301 / DSM 18059 / JW/NM-WN-LF).